We begin with the raw amino-acid sequence, 174 residues long: Sarcoplasmic calcium-binding protein (174 aa).

S1 is subject to N-acetylserine. 4 EF-hand domains span residues 3–38, 55–90, 91–126, and 125–160; these read LWVQ…FAKE, GVWD…NAKA, VVEG…LGLN, and LNPD…FFIN. 4 residues coordinate Ca(2+): D16, D18, D20, and D27. D104, N106, D108, M110, E115, D138, N140, D142, and E149 together coordinate Ca(2+).

Functionally, like parvalbumins, SCPs seem to be more abundant in fast contracting muscles, but no functional relationship can be established from this distribution. The chain is Sarcoplasmic calcium-binding protein from Perinereis vancaurica tetradentata (Sandworm).